A 191-amino-acid polypeptide reads, in one-letter code: Insulin-like peptide INSL6 (191 aa).

The N-terminal stretch at 1–22 is a signal peptide; sequence MKQLCCSCLLWLGLLLTPFSRE. Cystine bridges form between Cys-33-Cys-172, Cys-45-Cys-185, and Cys-171-Cys-176. Residues 53–161 constitute a propeptide, connecting peptide; that stretch reads FEMEEQSPMT…RSLFWGNHSQ (109 aa).

Belongs to the insulin family.

Its subcellular location is the secreted. Its function is as follows. May have a role in sperm development and fertilization. This Mus musculus (Mouse) protein is Insulin-like peptide INSL6 (Insl6).